The chain runs to 102 residues: NADH-quinone oxidoreductase subunit K (102 aa).

3 consecutive transmembrane segments (helical) span residues 6–26, 30–50, and 64–84; these read MHHG…GILV, LIFI…AFVV, and FIFI…LLLL.

It belongs to the complex I subunit 4L family. In terms of assembly, NDH-1 is composed of 14 different subunits. Subunits NuoA, H, J, K, L, M, N constitute the membrane sector of the complex.

It is found in the cell inner membrane. It carries out the reaction a quinone + NADH + 5 H(+)(in) = a quinol + NAD(+) + 4 H(+)(out). Its function is as follows. NDH-1 shuttles electrons from NADH, via FMN and iron-sulfur (Fe-S) centers, to quinones in the respiratory chain. The immediate electron acceptor for the enzyme in this species is believed to be ubiquinone. Couples the redox reaction to proton translocation (for every two electrons transferred, four hydrogen ions are translocated across the cytoplasmic membrane), and thus conserves the redox energy in a proton gradient. The polypeptide is NADH-quinone oxidoreductase subunit K (Nitrosospira multiformis (strain ATCC 25196 / NCIMB 11849 / C 71)).